We begin with the raw amino-acid sequence, 261 residues long: MSTTTCQVVAFLLSILGLAGCIAATGMDMWSTQDLYDNPVTSVFQYEGLWRSCVRQSSGFTECRPYFTILGLPAMLQAVRALMIVGIVLGAIGLLVSIFALKCIRIGSMEDSAKANMTLTSGIMFIVSGLCAIAGVSVFANMLVTNFWMSTANMYTGMGGMVQTVQTRYTFGAALFVGWVAGGLTLIGGVMMCIACRGLAPEETNYKAVSYHASGHSVAYKPGGFKASTGFGSNTKNKKIYDGGARTEDEVQSYPSKHDYV.

At 1 to 6 the chain is on the cytoplasmic side; sequence MSTTTC. A helical transmembrane segment spans residues 7–27; sequence QVVAFLLSILGLAGCIAATGM. Over 28 to 80 the chain is Extracellular; that stretch reads DMWSTQDLYDNPVTSVFQYEGLWRSCVRQSSGFTECRPYFTILGLPAMLQAVR. Residues 81–101 form a helical membrane-spanning segment; it reads ALMIVGIVLGAIGLLVSIFAL. At 102–122 the chain is on the cytoplasmic side; the sequence is KCIRIGSMEDSAKANMTLTSG. The chain crosses the membrane as a helical span at residues 123–143; it reads IMFIVSGLCAIAGVSVFANML. Topologically, residues 144–174 are extracellular; that stretch reads VTNFWMSTANMYTGMGGMVQTVQTRYTFGAA. Residues 175-195 traverse the membrane as a helical segment; sequence LFVGWVAGGLTLIGGVMMCIA. Residues 195-261 are required for role in regulation of RANKL-induced osteoclast differentiation; the sequence is ACRGLAPEET…QSYPSKHDYV (67 aa). At 196 to 261 the chain is on the cytoplasmic side; the sequence is CRGLAPEETN…QSYPSKHDYV (66 aa). Ser214 is modified (phosphoserine). A disordered region spans residues 242 to 261; sequence DGGARTEDEVQSYPSKHDYV.

Belongs to the claudin family. As to quaternary structure, interacts with TJP2/ZO-2. Interacts with TJP1/ZO-1. Interacts with YAP1 (phosphorylated); the interaction sequesters YAP1 away from the nucleus and thereby restricts transcription of YAP1 target genes. Interacts with CLDN19. As to expression, expression is restricted to the lung. Expression is restricted to the stomach mucosa where it is predominantly observed in the epithelial cells of the pit region and the base of the gastric glands including exocrine and endocrine cells (at protein level).

It localises to the cell junction. It is found in the tight junction. The protein resides in the cell membrane. Its subcellular location is the lateral cell membrane. Involved in alveolar fluid homeostasis via regulation of alveolar epithelial tight junction composition and therefore ion transport and solute permeability, potentially via downstream regulation of the actin cytoskeleton organization and beta-2-adrenergic signaling. Required for lung alveolarization and maintenance of the paracellular alveolar epithelial barrier. Acts to maintain epithelial progenitor cell proliferation and organ size, via regulation of YAP1 localization away from the nucleus and thereby restriction of YAP1 target gene transcription. Acts as a negative regulator of RANKL-induced osteoclast differentiation, potentially via relocation of TJP2/ZO-2 away from the nucleus, subsequently involved in bone resorption in response to calcium deficiency. Mediates the osteoprotective effects of estrogen, potentially via acting downstream of estrogen signaling independently of RANKL signaling pathways. Its function is as follows. Involved in the maintenance of homeostasis of the alveolar microenvironment via regulation of pH and subsequent T-cell activation in the alveolar space, is therefore indirectly involved in limiting C.neoformans infection. In terms of biological role, required for the formation of the gastric paracellular barrier via its role in tight junction formation, thereby involved in the response to gastric acidification. The chain is Claudin-18 (CLDN18) from Homo sapiens (Human).